The primary structure comprises 736 residues: ATP-dependent zinc metalloprotease FtsH (736 aa).

Disordered regions lie at residues 1 to 39 and 57 to 83; these read MDSNVDSQRVPDGQIFFRPVHPGISGKDMESGTSDGQQR and QQTQNRTGFASADTKQGSPEGADRKKM. Residues 1 to 87 lie on the Cytoplasmic side of the membrane; that stretch reads MDSNVDSQRV…ADRKKMPPGK (87 aa). Residues 57 to 73 show a composition bias toward polar residues; the sequence is QQTQNRTGFASADTKQG. A helical transmembrane segment spans residues 88 to 108; it reads AWLWFVLILIVNFLMVRLLIP. At 109-205 the chain is on the periplasmic side; sequence DAEQPVMVPY…KPIHEERSPW (97 aa). Residues 206 to 226 traverse the membrane as a helical segment; sequence ATIVYSFGPGLLFIAFYIWLF. Residues 227-736 are Cytoplasmic-facing; sequence RRMAQQGGLG…VSLPGVAGPS (510 aa). 301–308 lines the ATP pocket; that stretch reads GAPGTGKT. H522 is a Zn(2+) binding site. The active site involves E523. H526 and D598 together coordinate Zn(2+). Positions 706-736 are disordered; sequence PALDAGKLPVPDGGDKNAEPSVSLPGVAGPS.

The protein in the central section; belongs to the AAA ATPase family. It in the C-terminal section; belongs to the peptidase M41 family. Homohexamer. Zn(2+) serves as cofactor.

The protein resides in the cell inner membrane. In terms of biological role, acts as a processive, ATP-dependent zinc metallopeptidase for both cytoplasmic and membrane proteins. Plays a role in the quality control of integral membrane proteins. The protein is ATP-dependent zinc metalloprotease FtsH of Syntrophus aciditrophicus (strain SB).